A 2290-amino-acid chain; its full sequence is Protein Ycf2 (2290 aa).

Gly1644 to Ser1651 contacts ATP.

The protein belongs to the Ycf2 family.

It localises to the plastid. The protein localises to the chloroplast stroma. In terms of biological role, probable ATPase of unknown function. Its presence in a non-photosynthetic plant (Epifagus virginiana) and experiments in tobacco indicate that it has an essential function which is probably not related to photosynthesis. The chain is Protein Ycf2 from Nasturtium officinale (Watercress).